The sequence spans 650 residues: Probable protein phosphatase 2C 36 (650 aa).

Residues 146–166 (SGKKTKEKAKLKKSGSKSFTK) form a disordered region. Residues 148–166 (KKTKEKAKLKKSGSKSFTK) are compositionally biased toward basic residues. In terms of domain architecture, PPM-type phosphatase spans 239 to 641 (ESALEEPKIQ…DDVSVIVISL (403 aa)). Aspartate 276, glycine 277, aspartate 569, and aspartate 632 together coordinate Mn(2+).

This sequence belongs to the PP2C family. Requires Mg(2+) as cofactor. It depends on Mn(2+) as a cofactor.

It localises to the nucleus. The catalysed reaction is O-phospho-L-seryl-[protein] + H2O = L-seryl-[protein] + phosphate. The enzyme catalyses O-phospho-L-threonyl-[protein] + H2O = L-threonyl-[protein] + phosphate. In Arabidopsis thaliana (Mouse-ear cress), this protein is Probable protein phosphatase 2C 36 (PLL3).